A 541-amino-acid chain; its full sequence is Cilia- and flagella-associated protein 97 (541 aa).

Residues serine 8 and serine 19 each carry the phosphoserine modification. 5 disordered regions span residues 28-47 (ESNS…GINK), 93-296 (ERKA…KQEN), 313-337 (RCVK…VLDA), 406-430 (LSRQ…PPKL), and 495-514 (HYSP…GLSC). Basic and acidic residues-rich tracts occupy residues 35–47 (KQND…GINK), 93–107 (ERKA…HIEN), and 142–151 (RIPKIVKGED). A compositionally biased stretch (acidic residues) spans 152 to 161 (DYYTDGEESS). A Phosphothreonine modification is found at threonine 155. Phosphoserine occurs at positions 160 and 161. Over residues 176-201 (SSNLKKNVSKKYSSSSLSSSSSRSNS) the composition is skewed to low complexity. Residues 207-218 (GSDRQRRSESHS) show a composition bias toward basic and acidic residues. Composition is skewed to polar residues over residues 219 to 232 (SGKC…SSPK) and 240 to 250 (KSSAQPSSTKQ). Serine 230 is modified (phosphoserine). Serine 258 carries the post-translational modification Phosphoserine. Residues 267–277 (PLSTPDVSPAQ) show a composition bias toward polar residues. Residues 287–296 (QKVKVKKQEN) show a composition bias toward basic and acidic residues. The stretch at 382 to 459 (RKNYSFTREE…ALLKRLEAVK (78 aa)) forms a coiled coil. Residues 503-513 (SRTSSATSGLS) show a composition bias toward polar residues.

It belongs to the CFAP97 family. Highly expressed in testis with lower levels detected in other tissues including lung, heart and kidney.

In Mus musculus (Mouse), this protein is Cilia- and flagella-associated protein 97.